The sequence spans 425 residues: Serine--tRNA ligase 2 (425 aa).

Residue 234–236 (TAE) coordinates L-serine. 265-267 (RVE) serves as a coordination point for ATP. Position 288 (glutamate 288) interacts with L-serine. 352–355 (EVSS) provides a ligand contact to ATP. Residue serine 388 coordinates L-serine.

It belongs to the class-II aminoacyl-tRNA synthetase family. Type-1 seryl-tRNA synthetase subfamily. In terms of assembly, homodimer. The tRNA molecule binds across the dimer.

Its subcellular location is the cytoplasm. The catalysed reaction is tRNA(Ser) + L-serine + ATP = L-seryl-tRNA(Ser) + AMP + diphosphate + H(+). It carries out the reaction tRNA(Sec) + L-serine + ATP = L-seryl-tRNA(Sec) + AMP + diphosphate + H(+). The protein operates within aminoacyl-tRNA biosynthesis; selenocysteinyl-tRNA(Sec) biosynthesis; L-seryl-tRNA(Sec) from L-serine and tRNA(Sec): step 1/1. Functionally, catalyzes the attachment of serine to tRNA(Ser). Is also able to aminoacylate tRNA(Sec) with serine, to form the misacylated tRNA L-seryl-tRNA(Sec), which will be further converted into selenocysteinyl-tRNA(Sec). The polypeptide is Serine--tRNA ligase 2 (Clostridium acetobutylicum (strain ATCC 824 / DSM 792 / JCM 1419 / IAM 19013 / LMG 5710 / NBRC 13948 / NRRL B-527 / VKM B-1787 / 2291 / W)).